The primary structure comprises 142 residues: MSISSHDVGRTYPTTDPYLVTAEKIRELATALGDNAPAYRGDDPIAPPTFAMVLASRAWEALFDDEQLDLRLEHMIHTDQSFHWIRPLHEGDEVTAALTITSVRTRGNTDIIGINVSLDHVDGEHLGNATSTLWHTRPEGNA.

Belongs to the UPF0336 family.

This chain is UPF0336 protein PPA1896, found in Cutibacterium acnes (strain DSM 16379 / KPA171202) (Propionibacterium acnes).